Reading from the N-terminus, the 249-residue chain is 2,3-bisphosphoglycerate-dependent phosphoglycerate mutase (249 aa).

Substrate contacts are provided by residues 8 to 15, 21 to 22, Arg60, 87 to 90, Lys98, 114 to 115, and 183 to 184; these read RHGESVWN, TG, ERHY, RR, and GN. His9 acts as the Tele-phosphohistidine intermediate in catalysis. Glu87 functions as the Proton donor/acceptor in the catalytic mechanism.

It belongs to the phosphoglycerate mutase family. BPG-dependent PGAM subfamily.

The catalysed reaction is (2R)-2-phosphoglycerate = (2R)-3-phosphoglycerate. It functions in the pathway carbohydrate degradation; glycolysis; pyruvate from D-glyceraldehyde 3-phosphate: step 3/5. Catalyzes the interconversion of 2-phosphoglycerate and 3-phosphoglycerate. This Chloroherpeton thalassium (strain ATCC 35110 / GB-78) protein is 2,3-bisphosphoglycerate-dependent phosphoglycerate mutase.